A 106-amino-acid chain; its full sequence is UPF0145 protein CLL_A2504 (106 aa).

It belongs to the UPF0145 family.

In Clostridium botulinum (strain Eklund 17B / Type B), this protein is UPF0145 protein CLL_A2504.